We begin with the raw amino-acid sequence, 251 residues long: CDP-diacylglycerol pyrophosphatase (251 aa).

The helical transmembrane segment at 4 to 24 (AGLLFLVMIVIAVVAAGIGYW) threads the bilayer.

This sequence belongs to the Cdh family.

The protein localises to the cell inner membrane. The catalysed reaction is a CDP-1,2-diacyl-sn-glycerol + H2O = a 1,2-diacyl-sn-glycero-3-phosphate + CMP + 2 H(+). Its pathway is phospholipid metabolism; CDP-diacylglycerol degradation; phosphatidate from CDP-diacylglycerol: step 1/1. This Escherichia coli O127:H6 (strain E2348/69 / EPEC) protein is CDP-diacylglycerol pyrophosphatase.